Reading from the N-terminus, the 350-residue chain is MDINLFDFHLPEELIAQVPLEERETSRLMVLDRETGDIEHKHFTDILSYLHEGDCLVLNETKVMPARLQGVKEDTGAHIEVLLLKQEEGDKWETLVKPAKRVKEGTVISFGEGKLKATCTGTADQGGRQLEFSYDGIFYEILDELGEMPLPPYIKETLEDRDRYQTVYAKEIGSAAAPTAGLHFTEELLEKLKQKGVELAFITLHVGLGTFRPVSADTIEEHHMHAEYYHMSEETAALLNRVKENGGRIITVGTTSTRTLETIATDHDGKLCAASGWTDIFMYPGYEFKAIDGLITNFHLPKSTLIMLVSAFANRDNVLHAYNEAVKEKYRFFSFGDAMFVASHAKMGNK.

The protein belongs to the QueA family. In terms of assembly, monomer.

It localises to the cytoplasm. It carries out the reaction 7-aminomethyl-7-carbaguanosine(34) in tRNA + S-adenosyl-L-methionine = epoxyqueuosine(34) in tRNA + adenine + L-methionine + 2 H(+). The protein operates within tRNA modification; tRNA-queuosine biosynthesis. Transfers and isomerizes the ribose moiety from AdoMet to the 7-aminomethyl group of 7-deazaguanine (preQ1-tRNA) to give epoxyqueuosine (oQ-tRNA). This chain is S-adenosylmethionine:tRNA ribosyltransferase-isomerase, found in Bacillus cereus (strain ZK / E33L).